The following is a 693-amino-acid chain: Glycine--tRNA ligase beta subunit (693 aa).

It belongs to the class-II aminoacyl-tRNA synthetase family. As to quaternary structure, tetramer of two alpha and two beta subunits.

It is found in the cytoplasm. The catalysed reaction is tRNA(Gly) + glycine + ATP = glycyl-tRNA(Gly) + AMP + diphosphate. This Ligilactobacillus salivarius (strain UCC118) (Lactobacillus salivarius) protein is Glycine--tRNA ligase beta subunit.